Here is a 69-residue protein sequence, read N- to C-terminus: Cold shock-like protein CspE (69 aa).

The 61-residue stretch at 6-66 (GNVKWFNESK…GAKGPSAANV (61 aa)) folds into the CSD domain.

The protein resides in the cytoplasm. The polypeptide is Cold shock-like protein CspE (cspE) (Escherichia coli O6:H1 (strain CFT073 / ATCC 700928 / UPEC)).